We begin with the raw amino-acid sequence, 177 residues long: Large ribosomal subunit protein uL10 (177 aa).

This sequence belongs to the universal ribosomal protein uL10 family. As to quaternary structure, part of the ribosomal stalk of the 50S ribosomal subunit. The N-terminus interacts with L11 and the large rRNA to form the base of the stalk. The C-terminus forms an elongated spine to which L12 dimers bind in a sequential fashion forming a multimeric L10(L12)X complex.

In terms of biological role, forms part of the ribosomal stalk, playing a central role in the interaction of the ribosome with GTP-bound translation factors. This Legionella pneumophila (strain Corby) protein is Large ribosomal subunit protein uL10.